A 211-amino-acid chain; its full sequence is Dephospho-CoA kinase (211 aa).

The 205-residue stretch at 7–211 folds into the DPCK domain; it reads LIGVIGRSGA…ILTRRGVLGE (205 aa). ATP is bound at residue 15-20; the sequence is GAGKNV.

This sequence belongs to the CoaE family.

Its subcellular location is the cytoplasm. It carries out the reaction 3'-dephospho-CoA + ATP = ADP + CoA + H(+). It participates in cofactor biosynthesis; coenzyme A biosynthesis; CoA from (R)-pantothenate: step 5/5. In terms of biological role, catalyzes the phosphorylation of the 3'-hydroxyl group of dephosphocoenzyme A to form coenzyme A. The chain is Dephospho-CoA kinase from Treponema pallidum (strain Nichols).